The sequence spans 526 residues: Variant surface glycoprotein MITAT 1.4A (526 aa).

Residues 1–33 (MDCHTKETLGVTQWRRSTMLTLSLLYAITPADG) form the signal peptide. 2 disulfides stabilise this stretch: C47/C173 and C154/C215. Residues 157–193 (NEGGDGDGKDQLAPKGCRHGTEADFDAGAGPAESEVA) are disordered. N453 is a glycosylation site (N-linked (GlcNAc...) asparagine). D503 carries the GPI-anchor amidated aspartate lipid modification. Positions 504–526 (SSILVTKKFALTVVSAAFVALLF) are cleaved as a propeptide — removed in mature form.

It localises to the cell membrane. In terms of biological role, VSG forms a coat on the surface of the parasite. The trypanosome evades the immune response of the host by expressing a series of antigenically distinct VSGs from an estimated 1000 VSG genes. The polypeptide is Variant surface glycoprotein MITAT 1.4A (Trypanosoma brucei brucei).